Here is a 96-residue protein sequence, read N- to C-terminus: UPF0235 protein Helmi_20270 (96 aa).

Belongs to the UPF0235 family.

This is UPF0235 protein Helmi_20270 from Heliobacterium modesticaldum (strain ATCC 51547 / Ice1).